Consider the following 475-residue polypeptide: Squamosa promoter-binding-like protein 12 (475 aa).

The segment at 49 to 73 (NHGSTNSSGGTFTSSSELANGSSKS) is disordered. The span at 51–73 (GSTNSSGGTFTSSSELANGSSKS) shows a compositional bias: low complexity. The segment at 177–254 (SSYCQVEGCK…SDHNARRRKP (78 aa)) adopts an SBP-type zinc-finger fold. The Zn(2+) site is built by C180, C185, C202, H205, C221, C224, H228, and C240. The Bipartite nuclear localization signal signature appears at 237-253 (KKSCRRRLSDHNARRRK). The segment at 437 to 475 (GGGGFWQDGDDPPPLDHASQAQAFMHPGNGSSSGYGHLH) is disordered. Positions 465–475 (NGSSSGYGHLH) are enriched in polar residues.

As to expression, expressed in young panicles.

It localises to the nucleus. Functionally, trans-acting factor that binds specifically to the consensus nucleotide sequence 5'-TNCGTACAA-3'. May be involved in panicle development. In Oryza sativa subsp. japonica (Rice), this protein is Squamosa promoter-binding-like protein 12 (SPL12).